The following is a 209-amino-acid chain: Large ribosomal subunit protein uL3 (209 aa).

A disordered region spans residues 141 to 164 (RAVGSMGGSSDPSRTFKSKKMPGH).

It belongs to the universal ribosomal protein uL3 family. As to quaternary structure, part of the 50S ribosomal subunit. Forms a cluster with proteins L14 and L19.

In terms of biological role, one of the primary rRNA binding proteins, it binds directly near the 3'-end of the 23S rRNA, where it nucleates assembly of the 50S subunit. The polypeptide is Large ribosomal subunit protein uL3 (Clostridium acetobutylicum (strain ATCC 824 / DSM 792 / JCM 1419 / IAM 19013 / LMG 5710 / NBRC 13948 / NRRL B-527 / VKM B-1787 / 2291 / W)).